The following is a 660-amino-acid chain: ATPase WRNIP1 (660 aa).

The segment at 17-44 (QVQCPVCQQMMPAAHINSHLDRCLLLHP) adopts a UBZ4-type zinc-finger fold. Zn(2+)-binding residues include C20, C23, H31, H35, and C39. Residues 50–191 (PAAGPHRAGE…DDPGHWDADA (142 aa)) are disordered. Residues S65 and S75 each carry the phosphoserine modification. Positions 76 to 89 (ESSALKQPATPTAA) are enriched in polar residues. K81 participates in a covalent cross-link: Glycyl lysine isopeptide (Lys-Gly) (interchain with G-Cter in ubiquitin). T85 is modified (phosphothreonine). 2 positions are modified to phosphoserine: S91 and S92. Residues 92 to 104 (SEGEGEEGDDGGE) are compositionally biased toward acidic residues. T116 carries the post-translational modification Phosphothreonine. The segment covering 135 to 155 (ARKGLGKRPAAAAAAGSASPR) has biased composition (low complexity). A Glycyl lysine isopeptide (Lys-Gly) (interchain with G-Cter in ubiquitin) cross-link involves residue K141. Position 153 is a phosphoserine (S153). Over residues 159–182 (ETEAQEEEEAGVDGDGDADVDGED) the composition is skewed to acidic residues. K220 is covalently cross-linked (Glycyl lysine isopeptide (Lys-Gly) (interchain with G-Cter in ubiquitin)). Residue 265 to 271 (PGCGKTT) coordinates ATP. Glycyl lysine isopeptide (Lys-Gly) (interchain with G-Cter in ubiquitin) cross-links involve residues K296, K305, K311, K317, and K330. A Glycyl lysine isopeptide (Lys-Gly) (interchain with G-Cter in SUMO2); alternate cross-link involves residue K477. A Glycyl lysine isopeptide (Lys-Gly) (interchain with G-Cter in ubiquitin); alternate cross-link involves residue K477. Y529 and Y557 each carry phosphotyrosine. K622 is covalently cross-linked (Glycyl lysine isopeptide (Lys-Gly) (interchain with G-Cter in ubiquitin)). A Glycyl lysine isopeptide (Lys-Gly) (interchain with G-Cter in ubiquitin); alternate cross-link involves residue K628. At K628 the chain carries N6-acetyllysine; alternate. K631 is covalently cross-linked (Glycyl lysine isopeptide (Lys-Gly) (interchain with G-Cter in ubiquitin)).

Belongs to the AAA ATPase family. RarA/MGS1/WRNIP1 subfamily. As to quaternary structure, forms homooligomers, possibly octamers. Directly interacts with POLD1, POLD2 and POLD4. Interacts with the N-terminal domain of WRN. Interacts (via UBZ4-type zinc finger) with monoubiquitin and polyubiquitin. Interacts with TRIM14 and PPP6C; these interactions positively regulate the RIGI signaling pathway. In terms of processing, sumoylated with SUMO1 and SUMO2/3. Ubiquitously expressed.

The protein resides in the nucleus. It is found in the cytoplasm. It carries out the reaction ATP + H2O = ADP + phosphate + H(+). Functions as a modulator of initiation or reinitiation events during DNA polymerase delta-mediated DNA synthesis. In the presence of ATP, stimulation of DNA polymerase delta-mediated DNA synthesis is decreased. Also plays a role in the innate immune defense against viruses. Stabilizes the RIGI dsRNA interaction and promotes RIGI 'Lys-63'-linked polyubiquitination. In turn, RIGI transmits the signal through mitochondrial MAVS. The polypeptide is ATPase WRNIP1 (Rattus norvegicus (Rat)).